Reading from the N-terminus, the 620-residue chain is Phosphopentomutase (620 aa).

Alpha-D-glucose 1,6-bisphosphate contacts are provided by Arg-71 and Ser-173. Ser-173 acts as the Phosphoserine intermediate in catalysis. Residues Ser-173, Asp-330, Asp-332, and Asp-334 each contribute to the Mg(2+) site. Phosphoserine is present on Ser-173. Alpha-D-glucose 1,6-bisphosphate contacts are provided by Asp-334, Arg-335, Thr-408, Glu-432, and Lys-446.

This sequence belongs to the phosphohexose mutase family. Monomer. Mg(2+) serves as cofactor. In terms of tissue distribution, highly expressed in lung, spleen and thymus. Expressed at lower levels in liver, brain, kidney, skeletal muscle, testis and heart.

It is found in the cytoplasm. The protein localises to the cytosol. The catalysed reaction is alpha-D-ribose 1-phosphate = D-ribose 5-phosphate. It carries out the reaction 2-deoxy-alpha-D-ribose 1-phosphate = 2-deoxy-D-ribose 5-phosphate. The enzyme catalyses alpha-D-glucose 1-phosphate = alpha-D-glucose 6-phosphate. It catalyses the reaction O-phospho-L-seryl-[protein] + alpha-D-glucose 1-phosphate = alpha-D-glucose 1,6-bisphosphate + L-seryl-[protein]. The catalysed reaction is alpha-D-glucose 1,6-bisphosphate + L-seryl-[protein] = O-phospho-L-seryl-[protein] + alpha-D-glucose 6-phosphate. Its function is as follows. Catalyzes the conversion of the nucleoside breakdown products ribose-1-phosphate and deoxyribose-1-phosphate to the corresponding 5-phosphopentoses. Catalyzes the reversible isomerization of alpha-D-glucose 1-phosphate to alpha-D-glucose 6-phosphate but with a lower catalytic efficiency. The mechanism proceeds via the intermediate compound alpha-D-glucose 1,6-bisphosphate. In vitro, also has a low glucose 1,6-bisphosphate synthase activity which is most probably not physiologically relevant. This Mus musculus (Mouse) protein is Phosphopentomutase.